We begin with the raw amino-acid sequence, 104 residues long: Large ribosomal subunit protein uL24 (104 aa).

The protein belongs to the universal ribosomal protein uL24 family. Part of the 50S ribosomal subunit.

One of two assembly initiator proteins, it binds directly to the 5'-end of the 23S rRNA, where it nucleates assembly of the 50S subunit. In terms of biological role, one of the proteins that surrounds the polypeptide exit tunnel on the outside of the subunit. This Chromobacterium violaceum (strain ATCC 12472 / DSM 30191 / JCM 1249 / CCUG 213 / NBRC 12614 / NCIMB 9131 / NCTC 9757 / MK) protein is Large ribosomal subunit protein uL24.